Consider the following 208-residue polypeptide: MSSQVKLTKNAYRLEKVKLSRLETYLPTLKLKKALLQVEVTNAIREASECIQAYEESRESIYAFAELYSVPLYVDAIVNSFKIERVEKEYENVTGVEVPVIKNIVLTESSYSVLDTPIWVDTLVAYSREFVVNKVRSEVAVEKQRILEDELRNVSIRVNLFEKKLIPETTRMIKKIAIFLSDRSITDVGQVKMAKKKIQQRKEESECA.

Belongs to the V-ATPase D subunit family.

Functionally, produces ATP from ADP in the presence of a proton gradient across the membrane. This Chlamydia abortus (strain DSM 27085 / S26/3) (Chlamydophila abortus) protein is V-type ATP synthase subunit D.